A 293-amino-acid polypeptide reads, in one-letter code: 4-hydroxy-tetrahydrodipicolinate synthase (293 aa).

Residue T45 participates in pyruvate binding. Residue Y133 is the Proton donor/acceptor of the active site. K162 (schiff-base intermediate with substrate) is an active-site residue. I204 serves as a coordination point for pyruvate.

Belongs to the DapA family. In terms of assembly, homotetramer; dimer of dimers.

It is found in the cytoplasm. It carries out the reaction L-aspartate 4-semialdehyde + pyruvate = (2S,4S)-4-hydroxy-2,3,4,5-tetrahydrodipicolinate + H2O + H(+). It participates in amino-acid biosynthesis; L-lysine biosynthesis via DAP pathway; (S)-tetrahydrodipicolinate from L-aspartate: step 3/4. In terms of biological role, catalyzes the condensation of (S)-aspartate-beta-semialdehyde [(S)-ASA] and pyruvate to 4-hydroxy-tetrahydrodipicolinate (HTPA). The sequence is that of 4-hydroxy-tetrahydrodipicolinate synthase from Chelativorans sp. (strain BNC1).